We begin with the raw amino-acid sequence, 192 residues long: Protein A16 (192 aa).

Positions 1-22 (MLLANTAAAVLLLIVCIGASVG) are cleaved as a signal peptide. A C-type lectin domain is found at 71–186 (KNKKFTIGTL…CLNPLNIFPY (116 aa)). Cysteines 163 and 177 form a disulfide.

Expressed in the gut of adults.

The chain is Protein A16 (CTL3) from Anopheles gambiae (African malaria mosquito).